Reading from the N-terminus, the 142-residue chain is uncharacterized protein (142 aa).

This is an uncharacterized protein from Acanthamoeba polyphaga (Amoeba).